The chain runs to 947 residues: Regulator of spindle assembly protein 2 (947 aa).

2 disordered regions span residues 20–148 and 173–211; these read EKPA…LSEQ and SPHE…LKPR. Composition is skewed to basic and acidic residues over residues 30 to 50 and 62 to 84; these read PKYR…EGEK and TRED…DLRI. 2 stretches are compositionally biased toward polar residues: residues 90-102 and 179-188; these read SATP…SDQY and QQTIQESSEQ. Residues 276–320 adopt a coiled-coil conformation; it reads IIAEEAKKRRNEAEAVRKLIEVETQNAKKRAVIQELKDRIDKLTQ. 4 disordered regions span residues 407–453, 575–594, 600–662, and 681–705; these read KINP…RRIG, ERES…LEIP, SVTT…GLII, and EQSL…FLLD. Positions 411–422 are enriched in low complexity; it reads SSQLNQQSSSDA. Residues 430–449 are compositionally biased toward polar residues; the sequence is EASTQMTSRLAESAMTQTSP. Residues 563 to 591 adopt a coiled-coil conformation; sequence AGLSHYLEQVKKERESMEAQESESESMEL. Over residues 580 to 590 the composition is skewed to acidic residues; the sequence is EAQESESESME. Basic and acidic residues predominate over residues 645–657; it reads FEHEIEEHKEPEK.

As to quaternary structure, interacts with phosphatase regulatory subunit rsa-1 and tpxl-1. May interact with spd-5. May interact with sys-1.

The protein resides in the cytoplasm. The protein localises to the cytoskeleton. It localises to the microtubule organizing center. Its subcellular location is the centrosome. Recruits rsa-1 and, thereby, phosphatase let-92/paa-1 complex to the centrosomes. Recruits sys-1/beta-catenin to mitotic centrosomes during the first embryonic cell divisions. This chain is Regulator of spindle assembly protein 2, found in Caenorhabditis elegans.